The primary structure comprises 934 residues: Bifunctional uridylyltransferase/uridylyl-removing enzyme (934 aa).

The interval 1–379 (MSAHDLKLEE…TFSRRKRKLS (379 aa)) is uridylyltransferase. Residues 380 to 736 (DDGAFISENH…AKPHAFEAVT (357 aa)) are uridylyl-removing. Positions 496–613 (VDEHLLRCIA…IDFADTVQTM (118 aa)) constitute an HD domain. ACT domains follow at residues 737 to 818 (EITV…DMLA) and 848 to 931 (VIEV…RSPQ).

This sequence belongs to the GlnD family. Mg(2+) is required as a cofactor.

The catalysed reaction is [protein-PII]-L-tyrosine + UTP = [protein-PII]-uridylyl-L-tyrosine + diphosphate. It carries out the reaction [protein-PII]-uridylyl-L-tyrosine + H2O = [protein-PII]-L-tyrosine + UMP + H(+). Its activity is regulated as follows. Uridylyltransferase (UTase) activity is inhibited by glutamine, while glutamine activates uridylyl-removing (UR) activity. Functionally, modifies, by uridylylation and deuridylylation, the PII regulatory proteins (GlnB and homologs), in response to the nitrogen status of the cell that GlnD senses through the glutamine level. Under low glutamine levels, catalyzes the conversion of the PII proteins and UTP to PII-UMP and PPi, while under higher glutamine levels, GlnD hydrolyzes PII-UMP to PII and UMP (deuridylylation). Thus, controls uridylylation state and activity of the PII proteins, and plays an important role in the regulation of nitrogen assimilation and metabolism. The chain is Bifunctional uridylyltransferase/uridylyl-removing enzyme from Brucella suis biovar 1 (strain 1330).